The sequence spans 926 residues: Isoleucine--tRNA ligase (926 aa).

Residues 1-21 (MKMKETLQLGKTAFPMRGNLP) are disordered. Positions 57–67 (PYANGNIHLGH) match the 'HIGH' region motif. Position 552 (glutamate 552) interacts with L-isoleucyl-5'-AMP. The 'KMSKS' region signature appears at 593–597 (KMSKS). Residue lysine 596 coordinates ATP. Positions 886, 889, 906, and 909 each coordinate Zn(2+).

It belongs to the class-I aminoacyl-tRNA synthetase family. IleS type 1 subfamily. As to quaternary structure, monomer. The cofactor is Zn(2+).

Its subcellular location is the cytoplasm. The enzyme catalyses tRNA(Ile) + L-isoleucine + ATP = L-isoleucyl-tRNA(Ile) + AMP + diphosphate. Catalyzes the attachment of isoleucine to tRNA(Ile). As IleRS can inadvertently accommodate and process structurally similar amino acids such as valine, to avoid such errors it has two additional distinct tRNA(Ile)-dependent editing activities. One activity is designated as 'pretransfer' editing and involves the hydrolysis of activated Val-AMP. The other activity is designated 'posttransfer' editing and involves deacylation of mischarged Val-tRNA(Ile). This chain is Isoleucine--tRNA ligase, found in Enterococcus faecalis (strain ATCC 700802 / V583).